We begin with the raw amino-acid sequence, 737 residues long: Phosphoribosylformylglycinamidine synthase subunit PurL (737 aa).

His-50 is a catalytic residue. ATP-binding residues include Tyr-53 and Lys-92. Glu-94 provides a ligand contact to Mg(2+). Residues 95 to 98 (SHNH) and Arg-117 each bind substrate. Catalysis depends on His-96, which acts as the Proton acceptor. Mg(2+) is bound at residue Asp-118. Residue Gln-241 coordinates substrate. Asp-269 is a binding site for Mg(2+). Residue 313-315 (ESQ) coordinates substrate. Positions 494 and 531 each coordinate ATP. Asn-532 is a Mg(2+) binding site. Position 534 (Ser-534) interacts with substrate.

It belongs to the FGAMS family. In terms of assembly, monomer. Part of the FGAM synthase complex composed of 1 PurL, 1 PurQ and 2 PurS subunits.

The protein resides in the cytoplasm. It carries out the reaction N(2)-formyl-N(1)-(5-phospho-beta-D-ribosyl)glycinamide + L-glutamine + ATP + H2O = 2-formamido-N(1)-(5-O-phospho-beta-D-ribosyl)acetamidine + L-glutamate + ADP + phosphate + H(+). It functions in the pathway purine metabolism; IMP biosynthesis via de novo pathway; 5-amino-1-(5-phospho-D-ribosyl)imidazole from N(2)-formyl-N(1)-(5-phospho-D-ribosyl)glycinamide: step 1/2. In terms of biological role, part of the phosphoribosylformylglycinamidine synthase complex involved in the purines biosynthetic pathway. Catalyzes the ATP-dependent conversion of formylglycinamide ribonucleotide (FGAR) and glutamine to yield formylglycinamidine ribonucleotide (FGAM) and glutamate. The FGAM synthase complex is composed of three subunits. PurQ produces an ammonia molecule by converting glutamine to glutamate. PurL transfers the ammonia molecule to FGAR to form FGAM in an ATP-dependent manner. PurS interacts with PurQ and PurL and is thought to assist in the transfer of the ammonia molecule from PurQ to PurL. This is Phosphoribosylformylglycinamidine synthase subunit PurL from Rhodopseudomonas palustris (strain BisA53).